The primary structure comprises 674 residues: Kelch repeat and BTB domain-containing protein 6 (674 aa).

Residues 1-28 (MQSREDAPRSRRLASPRGGKRPKKIHKP) form a disordered region. Basic residues predominate over residues 10 to 27 (SRRLASPRGGKRPKKIHK). Residues 63 to 138 (CDVTIEVVTP…CYTGRVSLSE (76 aa)) form the BTB domain. Kelch repeat units follow at residues 386 to 435 (AVCI…YLNG), 436 to 484 (YIYI…VIRD), 486 to 523 (LYAL…VFNE), 524 to 564 (EIYC…IIKH), 567 to 616 (KLLL…CLSA), and 642 to 673 (TEWD…RVAP). The segment at 631-674 (TEEEEIPSESSTEWDLGGFSEPDSESGSSSSLSDDDFWVRVAPQ) is disordered. The ATG8 interaction motif (AIM) signature appears at 668–671 (WVRV).

Core component of a BCR3 (BTB-CUL3-RBX1) E3 ubiquitin ligase complex, also named Cul3-RING ubiquitin ligase complex CUL3(KBTBD6/7), composed of CUL3, RBX1, KBTBD6 and KBTBD7. Interacts with GABARAP; the interaction is direct and is required for the ubiquitination of TIAM1. Interacts with GABARAPL1, GABARAPL2 and MAP1LC3B; the interaction is direct.

It is found in the cytoplasm. It localises to the nucleus. The protein operates within protein modification; protein ubiquitination. Functionally, as part of the CUL3(KBTBD6/7) E3 ubiquitin ligase complex functions as a substrate adapter for the RAC1 guanine exchange factor (GEF) TIAM1, mediating its 'Lys-48' ubiquitination and proteasomal degradation. By controlling this ubiquitination, regulates RAC1 signal transduction and downstream biological processes including the organization of the cytoskeleton, cell migration and cell proliferation. Ubiquitination of TIAM1 requires the membrane-associated protein GABARAP which may restrict locally the activity of the complex. In Homo sapiens (Human), this protein is Kelch repeat and BTB domain-containing protein 6.